A 368-amino-acid polypeptide reads, in one-letter code: MGVYLSTPKTEKLSEDGENDKLKFGLSSMQGWRATMEDAHSALLDIDNDTSFFGVFDGHGGRVVAKFCAKYLHREVLRSEAYSAGDLGNAAHKAFFRMDEMMRGQRGWRELQALGDKINQISGMIEGLIWSPRGSDSNDQHDDWAFEEGPHSDFAGPTCGSTACVAIVRNSQLVVANAGDSRCVISRNGQAYNLSRDHKPELEAERERILKAGGYIQMGRVNGTINLSRAIGDIEFKQNKFLSPDKQMLTANPDINTVELCDDDDFLVLACDGIWDCMSSQQLVDFIHEHINTESSLSAVCERVLDRCLAPSTLGGEGCDNMTMILVQFKKPISQNKNVSPAEQSAADKQPTGDTHWSEIHVTEESSS.

One can recognise a PPM-type phosphatase domain in the interval 23–329; that stretch reads KFGLSSMQGW…DNMTMILVQF (307 aa). The Mn(2+) site is built by Asp-57, Gly-58, Asp-272, and Asp-320. The segment at 336 to 368 is disordered; sequence NKNVSPAEQSAADKQPTGDTHWSEIHVTEESSS. The span at 356 to 368 shows a compositional bias: basic and acidic residues; sequence HWSEIHVTEESSS.

Belongs to the PP2C family. Mg(2+) is required as a cofactor. It depends on Mn(2+) as a cofactor.

The catalysed reaction is O-phospho-L-seryl-[protein] + H2O = L-seryl-[protein] + phosphate. It carries out the reaction O-phospho-L-threonyl-[protein] + H2O = L-threonyl-[protein] + phosphate. This Oryza sativa subsp. japonica (Rice) protein is Probable protein phosphatase 2C 58.